Reading from the N-terminus, the 321-residue chain is Glutathione synthetase (321 aa).

The ATP-grasp domain occupies 125–311 (EKLFTGWFPH…IAGQFIAFLE (187 aa)). Residue 151 to 208 (FIREQKEVVIKPLGAMAGESIFYLTVNDPNIPVVIETMTANGHQLVMAQRFIPEVKSG) participates in ATP binding. Mg(2+) is bound by residues E282 and N284.

Belongs to the prokaryotic GSH synthase family. Mg(2+) serves as cofactor. Mn(2+) is required as a cofactor.

The catalysed reaction is gamma-L-glutamyl-L-cysteine + glycine + ATP = glutathione + ADP + phosphate + H(+). The protein operates within sulfur metabolism; glutathione biosynthesis; glutathione from L-cysteine and L-glutamate: step 2/2. In Coxiella burnetii (strain RSA 493 / Nine Mile phase I), this protein is Glutathione synthetase.